We begin with the raw amino-acid sequence, 611 residues long: Phosphatidylinositol 3,4,5-trisphosphate 3-phosphatase and protein-tyrosine-phosphatase PTEN2A (611 aa).

2 disordered regions span residues 1–42 (MSSE…GVAS) and 87–109 (GIRL…SSAT). At S91 the chain carries Phosphoserine. Residues 100–109 (TTTEGTSSAT) show a composition bias toward low complexity. One can recognise a Phosphatase tensin-type domain in the interval 145-324 (RRYQEGGFDL…KYFERILTYF (180 aa)). C263 functions as the Phosphocysteine intermediate in the catalytic mechanism. A C2 tensin-type domain is found at 331-458 (GRRCMLRGFR…FMVEVVLADI (128 aa)). The segment covering 462–486 (IPTNPSSETASKTPEETSAANSSPV) has biased composition (polar residues). Residues 462–589 (IPTNPSSETA…VNASSSSESE (128 aa)) are disordered. Positions 495-507 (PDKETENPDKDDV) are enriched in basic and acidic residues. The residue at position 509 (S509) is a Phosphoserine. 2 stretches are compositionally biased toward polar residues: residues 514 to 530 (DSTG…SQTP) and 549 to 565 (VSIS…QGVT).

The protein belongs to the PTEN phosphatase protein family. Expressed in seedlings, roots, stems, leaves, flowers and siliques. However, at protein level, not observed in older leaves and mature siliques.

The enzyme catalyses O-phospho-L-tyrosyl-[protein] + H2O = L-tyrosyl-[protein] + phosphate. The catalysed reaction is a 1,2-diacyl-sn-glycero-3-phospho-(1D-myo-inositol-3,4,5-trisphosphate) + H2O = a 1,2-diacyl-sn-glycero-3-phospho-(1D-myo-inositol-4,5-bisphosphate) + phosphate. Binds phosphatidic acid. Protein tyrosine phosphatase that also exhibits lipid phosphatase activity. Hydrolyzed poorly p-nitrophenyl phosphate (p-NPP). Can use PtdIns isomers as substrates. Removes efficiently phosphate from the D3 position of the inositol ring, less from the D4 position and not at all from the D5 position on monophosphorylated PtdIns isomers (PIPs). The presence of a phosphate group in the D5 position on PIP(2) isomers reduces lipid phosphatase activity. Mostly active on PtdIns(3)P and PtdIns(3,4)P(2), to a lower extent, on PtdIns(4)P and PtdIns(3,5)P(2), but barely against PtdIns(3,4,5)P(3) as substrate. The chain is Phosphatidylinositol 3,4,5-trisphosphate 3-phosphatase and protein-tyrosine-phosphatase PTEN2A from Arabidopsis thaliana (Mouse-ear cress).